Here is a 199-residue protein sequence, read N- to C-terminus: Small ribosomal subunit protein uS4c (199 aa).

The span at 1–24 (MESDQSKVESDQSKMESDQSKVES) shows a compositional bias: basic and acidic residues. A disordered region spans residues 1–35 (MESDQSKVESDQSKMESDQSKVESDQSISQSTSKK). In terms of domain architecture, S4 RNA-binding spans 84–146 (MRLDNIIFRL…QKSQELIKRN (63 aa)).

Belongs to the universal ribosomal protein uS4 family. As to quaternary structure, part of the 30S ribosomal subunit. Contacts protein S5. The interaction surface between S4 and S5 is involved in control of translational fidelity.

Its subcellular location is the plastid. It localises to the chloroplast. Functionally, one of the primary rRNA binding proteins, it binds directly to 16S rRNA where it nucleates assembly of the body of the 30S subunit. With S5 and S12 plays an important role in translational accuracy. The sequence is that of Small ribosomal subunit protein uS4c (rps4) from Psilotum nudum (Whisk fern).